Consider the following 740-residue polypeptide: N-acetylated-alpha-linked acidic dipeptidase 2 (740 aa).

Topologically, residues 1–7 (MARPRHL) are cytoplasmic. A helical; Signal-anchor for type II membrane protein membrane pass occupies residues 8 to 31 (RGLGMCITAVLASFIAGFTVGWFI). The Extracellular segment spans residues 32 to 740 (KPLKETTTSA…AAAGTLTNVL (709 aa)). N-linked (GlcNAc...) asparagine glycans are attached at residues Asn111, Asn143, and Asn185. Substrate is bound by residues Arg200 and Asn247. Thr259 and Tyr262 together coordinate Ca(2+). Residues 264 to 577 (AKEYTFRLPV…QLRGALVYEL (314 aa)) form an NAALADase region. Asn314 carries an N-linked (GlcNAc...) asparagine glycan. Residues His367 and Asp377 each coordinate Zn(2+). Glu414 serves as a coordination point for substrate. Glu414 acts as the Nucleophile; for NAALADase activity in catalysis. Glu415 serves as a coordination point for Zn(2+). Residues Glu423 and Glu426 each contribute to the Ca(2+) site. Residue Asp443 coordinates Zn(2+). Residue Asn449 is glycosylated (N-linked (GlcNAc...) asparagine). Substrate-binding positions include 507 to 508 (SG), 524 to 526 (RAR), Tyr542, and 542 to 543 (YH). His543 contributes to the Zn(2+) binding site. The N-linked (GlcNAc...) asparagine glycan is linked to Asn603. The active-site Charge relay system is Ser618. N-linked (GlcNAc...) asparagine glycosylation is present at Asn628. Catalysis depends on charge relay system residues Asp656 and His679. 689–690 (KY) lines the substrate pocket.

This sequence belongs to the peptidase M28 family. M28B subfamily. As to quaternary structure, homodimer. The cofactor is Zn(2+). In terms of tissue distribution, expressed ovary, testes and lung, but not brain.

Its subcellular location is the cell membrane. The catalysed reaction is Release of an unsubstituted, C-terminal glutamyl residue, typically from Ac-Asp-Glu or folylpoly-gamma-glutamates.. In terms of biological role, has N-acetylated-alpha-linked-acidic dipeptidase (NAALADase) activity. Also exhibits a dipeptidyl-peptidase IV type activity. Inactivates the peptide neurotransmitter N-acetylaspartylglutamate. This Mus musculus (Mouse) protein is N-acetylated-alpha-linked acidic dipeptidase 2 (Naalad2).